Reading from the N-terminus, the 581-residue chain is Laccase-2 (581 aa).

The signal sequence occupies residues 1–19; sequence MKYSTVFTALTALFAQASA. Plastocyanin-like domains lie at 74-191 and 197-353; these read SVEN…GPAT and DVGA…YDSS. N-linked (GlcNAc...) asparagine glycans are attached at residues asparagine 77, asparagine 93, and asparagine 120. The Cu cation site is built by histidine 125, histidine 127, histidine 169, and histidine 171. The cysteines at positions 146 and 562 are disulfide-linked. N-linked (GlcNAc...) asparagine glycosylation is found at asparagine 232, asparagine 283, asparagine 343, asparagine 408, asparagine 427, and asparagine 441. Positions 413 to 547 constitute a Plastocyanin-like 3 domain; sequence LLDWSSPTTL…AMQFVESQSS (135 aa). Residues histidine 464, histidine 467, histidine 469, histidine 526, cysteine 527, histidine 528, and histidine 532 each coordinate Cu cation.

It belongs to the multicopper oxidase family. The cofactor is Cu cation.

It localises to the secreted. It catalyses the reaction 4 hydroquinone + O2 = 4 benzosemiquinone + 2 H2O. In terms of biological role, lignin degradation and detoxification of lignin-derived products. The chain is Laccase-2 (lcc2) from Botryotinia fuckeliana (Noble rot fungus).